A 288-amino-acid polypeptide reads, in one-letter code: NAD(P)H quinone oxidoreductase YCP4 (288 aa).

The Flavodoxin-like domain occupies 3-192 (IAIIQYSTYG…EIAEKQGEAF (190 aa)). FMN contacts are provided by residues 9–13 (STYGH) and 110–164 (VFVS…SPYG). The disordered stretch occupies residues 202–288 (GSKKTNTTTT…KSSCSKCIIM (87 aa)). Positions 205–254 (KTNTTTTSKSAATSDAAGTTSGTAAGTSAATGAATGTSAPKESTKEASSS) are enriched in low complexity. The segment covering 261 to 288 (NGTATRTQQSTKAPETAEKSSCSKCIIM) has biased composition (polar residues).

The protein belongs to the WrbA family. It depends on FMN as a cofactor.

The protein localises to the cell membrane. The enzyme catalyses a quinone + NADH + H(+) = a quinol + NAD(+). It carries out the reaction a quinone + NADPH + H(+) = a quinol + NADP(+). In terms of biological role, flavodoxin-like protein (FLP) that plays a role in cell wall integrity, oxidative stress protection and virulence. FLPs act as NAD(P)H quinone oxidoreductases. Reduces ubiquinone (coenzyme Q), enabling it to serve as an antioxidant in the membrane. This chain is NAD(P)H quinone oxidoreductase YCP4, found in Candida albicans (strain SC5314 / ATCC MYA-2876) (Yeast).